The sequence spans 491 residues: Protein OrfX3 (491 aa).

It belongs to the TULIP P47 family. Heterodimer of OrfX1 and OrfX3; crystallizes as a dimer of heterodimers.

Its function is as follows. Expression of the ptox operon (ntnh-orfX1-orfX2-orfX3-pmp1) in B.thuringiensis kills Anopheles but not Aedes mosquito 3rd instar larvae. The ntnh-pmp1 construct is about half as toxic. The chain is Protein OrfX3 from Paraclostridium bifermentans (Clostridium bifermentans).